A 462-amino-acid polypeptide reads, in one-letter code: cAMP-dependent protein kinase regulatory subunit (462 aa).

A dimerization and phosphorylation region spans residues 54–203 (TPSPRFPPSP…RLKYAIEGNF (150 aa)). Residues 79 to 157 (FGANANPFGG…PTTDSYPAQY (79 aa)) form a disordered region. The span at 80–102 (GANANPFGGSSSNPNPFGGSASP) shows a compositional bias: low complexity. S164 carries the phosphoserine modification. Residues 204 to 333 (LFSH…FLEE), E282, R291, 336 to 453 (ILSS…KTGV), E401, and R410 each bind 3',5'-cyclic AMP.

It belongs to the cAMP-dependent kinase regulatory chain family. In terms of assembly, tetramer, composed of 2 regulatory (R) and 2 catalytic (C) subunits. In the presence of cAMP it dissociates into 2 active monomeric C subunits and an R dimer.

This chain is cAMP-dependent protein kinase regulatory subunit (pkar1), found in Hypocrea atroviridis (Trichoderma atroviride).